A 710-amino-acid chain; its full sequence is F-box only protein 40 (710 aa).

The TRAF-type zinc-finger motif lies at 53 to 114 (EHTLLCPLEQ…VDSETFLHEN (62 aa)). Disordered stretches follow at residues 152–174 (DATEEEPDMNGDTSWEETGGAVG) and 234–279 (GSLG…SQEL). The segment covering 238–248 (KSEDKNGDVAG) has biased composition (basic and acidic residues). The region spanning 572 to 626 (LNSLTSLPLEVLQYIAGFLDSISLSQLSQVSVLMRNICATLLQERGMVLSQWKKK) is the F-box domain.

In terms of assembly, directly interacts with SKP1 and CUL1. As to expression, expressed only in heart and skeletal muscle.

The protein resides in the cytoplasm. Functionally, probable substrate-recognition component of the SCF (SKP1-CUL1-F-box protein)-type E3 ubiquitin ligase complex that may function in myogenesis. The polypeptide is F-box only protein 40 (Fbxo40) (Mus musculus (Mouse)).